A 3164-amino-acid polypeptide reads, in one-letter code: Protein eyes shut homolog (3164 aa).

An N-terminal signal peptide occupies residues 1 to 21; sequence MTDKSIIILSLMVFHSSFING. N-linked (GlcNAc...) asparagine glycosylation is found at asparagine 42, asparagine 105, asparagine 117, and asparagine 166. EGF-like domains lie at 170–212, 213–254, and 256–292; these read KQQF…KYCQ, ELDA…KNCS, and IIGQCQPHVCFHGNCSNITSNSFICECDEQFSGPFCE. Cystine bridges form between cysteine 174–cysteine 189, cysteine 183–cysteine 200, cysteine 202–cysteine 211, cysteine 217–cysteine 228, cysteine 222–cysteine 242, cysteine 244–cysteine 253, cysteine 260–cysteine 270, cysteine 265–cysteine 280, and cysteine 282–cysteine 291. Residues asparagine 225, asparagine 252, asparagine 269, and asparagine 272 are each glycosylated (N-linked (GlcNAc...) asparagine). Residues asparagine 311 and asparagine 343 are each glycosylated (N-linked (GlcNAc...) asparagine). 2 consecutive EGF-like domains span residues 332 to 368 and 370 to 406; these read DVSECSLVPCQNGTDCIQISNDVMCICSPIFTDLLCK and IQTSCESFSLRNNATCKKWEKDYHCSCISGFTEKNCE. 5 disulfide bridges follow: cysteine 336–cysteine 347, cysteine 341–cysteine 356, cysteine 358–cysteine 367, cysteine 374–cysteine 385, and cysteine 396–cysteine 405. Asparagine 382 carries N-linked (GlcNAc...) asparagine glycosylation. Residues asparagine 506, asparagine 521, and asparagine 566 are each glycosylated (N-linked (GlcNAc...) asparagine). The EGF-like 6 domain maps to 567–602; it reads TTDDQENECQHEAICKDEINRPRCSCSLSYIGRLCV. Cystine bridges form between cysteine 575–cysteine 590 and cysteine 592–cysteine 601. 2 N-linked (GlcNAc...) asparagine glycosylation sites follow: asparagine 611 and asparagine 654. An EGF-like 7 domain is found at 643–679; the sequence is DTEDCKSVSCKNGTTSIHLRGYFFCKCVPGFKGTQRE. 6 cysteine pairs are disulfide-bonded: cysteine 652–cysteine 667, cysteine 685–cysteine 696, cysteine 690–cysteine 705, cysteine 707–cysteine 719, cysteine 737–cysteine 748, and cysteine 742–cysteine 757. The EGF-like 8; calcium-binding domain maps to 681 to 720; sequence DIDECASHPCKNGATCIDQPGNYFCQCVPPFKVVDGFSCL. The EGF-like 9; calcium-binding domain maps to 733–769; the sequence is DIDDCILNACEHNSTCKDLHLSYQCVCLSGWEGNFSE. N-linked (GlcNAc...) asparagine glycans are attached at residues asparagine 745, asparagine 766, asparagine 782, asparagine 783, and asparagine 805. The 37-residue stretch at 771-807 folds into the EGF-like 10; calcium-binding domain; that stretch reads ESNECKMNPCKNNSTCIDLYKSYRCECTSGWTGQNCS. Disulfide bonds link cysteine 775–cysteine 786, cysteine 780–cysteine 795, cysteine 797–cysteine 806, cysteine 813–cysteine 824, cysteine 818–cysteine 835, cysteine 837–cysteine 846, cysteine 853–cysteine 866, cysteine 860–cysteine 876, cysteine 878–cysteine 887, cysteine 894–cysteine 905, cysteine 899–cysteine 914, cysteine 916–cysteine 925, cysteine 932–cysteine 943, cysteine 937–cysteine 952, cysteine 954–cysteine 963, cysteine 970–cysteine 981, cysteine 975–cysteine 990, cysteine 992–cysteine 1001, cysteine 1008–cysteine 1019, cysteine 1013–cysteine 1028, cysteine 1030–cysteine 1039, cysteine 1046–cysteine 1056, cysteine 1051–cysteine 1065, cysteine 1067–cysteine 1076, cysteine 1083–cysteine 1094, cysteine 1088–cysteine 1103, cysteine 1105–cysteine 1114, cysteine 1121–cysteine 1137, cysteine 1131–cysteine 1147, cysteine 1149–cysteine 1158, cysteine 1165–cysteine 1176, cysteine 1170–cysteine 1185, and cysteine 1187–cysteine 1196. EGF-like domains are found at residues 809 to 847, 849 to 888, and 890 to 926; these read EINECDSDPCMNGGLCHESTIPGQFVCLCPPLYTGRFCH, RYNPCDLLHNPCRNNSTCLALVDGNQHCICREEFEGKNCE, and DVKECLFLSCQDYGDCEDMVNNFRCICRPGFSGSLCE. N-linked (GlcNAc...) asparagine glycans are attached at residues asparagine 862 and asparagine 863. The EGF-like 14; calcium-binding domain occupies 928–964; the sequence is EINECSSEPCKNNGTCVDLTNRFFCNCEPGYHGPFCE. Asparagine 940 carries N-linked (GlcNAc...) asparagine glycosylation. The EGF-like 15 domain maps to 966 to 1002; that stretch reads DVNKCKISPCLDEENCVYRTDGYNCLCAPGYTGINCE. Positions 1004-1040 constitute an EGF-like 16; calcium-binding domain; that stretch reads NLDECLSEPCLHDGVCIDGINHYTCDCKSGFFGTHCE. EGF-like domains are found at residues 1042-1077, 1079-1115, and 1117-1159; these read NANDCLSNPCLHGRCTELINEYPCSCDADGTSTQCK, KINDCTSIPCMNEGFCQKSAHGFTCICPRGYTGAYCE, and SIDN…QFCE. The 37-residue stretch at 1161–1197 folds into the EGF-like 20; calcium-binding domain; sequence NINECSSSPCLHGADCEDHINGYVCKCQPGWSGHHCE. Residues asparagine 1509, asparagine 1522, asparagine 1906, asparagine 1941, asparagine 1960, and asparagine 2033 are each glycosylated (N-linked (GlcNAc...) asparagine). The region spanning 1883–2063 is the Laminin G-like 1 domain; that stretch reads FSCVRYYGDS…AVKNYHINNC (181 aa). Cystine bridges form between cysteine 2037/cysteine 2063, cysteine 2103/cysteine 2114, cysteine 2108/cysteine 2128, and cysteine 2130/cysteine 2139. The EGF-like 21 domain occupies 2099-2140; that stretch reads APSVCQQDVCHNGGTCHPIFLSRGIVSFQCDCPLHFTGRFCE. Positions 2145-2339 constitute a Laminin G-like 2 domain; that stretch reads LFFPSFNGNS…NIENCHVPWC (195 aa). Asparagine 2170, asparagine 2185, and asparagine 2228 each carry an N-linked (GlcNAc...) asparagine glycan. 6 cysteine pairs are disulfide-bonded: cysteine 2308–cysteine 2339, cysteine 2339–cysteine 2350, cysteine 2344–cysteine 2359, cysteine 2375–cysteine 2386, cysteine 2380–cysteine 2396, and cysteine 2398–cysteine 2407. 2 consecutive EGF-like domains span residues 2335-2368 and 2371-2408; these read HVPWCAHHLCRNNGTCISDNENLFCECPRLYSGK and QFASCENNPCGNGATCVPKSGTDIVCLCPYGRSGPLCT. An N-linked (GlcNAc...) asparagine glycan is attached at asparagine 2347. Asparagine 2412, asparagine 2453, asparagine 2484, asparagine 2506, and asparagine 2532 each carry an N-linked (GlcNAc...) asparagine glycan. The Laminin G-like 3 domain maps to 2419–2609; it reads SGTDAFGYTS…PNAGRSVGQC (191 aa). Cystine bridges form between cysteine 2576/cysteine 2609, cysteine 2614/cysteine 2625, and cysteine 2619/cysteine 2634. 2 EGF-like domains span residues 2610-2646 and 2648-2689; these read HASPCSLMKCGNGGTCIESGTSVYCNCTTGWKGAFCT and TVST…IYCE. Asparagine 2635 carries an N-linked (GlcNAc...) asparagine glycan. Intrachain disulfides connect cysteine 2636-cysteine 2645, cysteine 2652-cysteine 2668, cysteine 2662-cysteine 2677, and cysteine 2679-cysteine 2688. One can recognise a Laminin G-like 4 domain in the interval 2717-2895; sequence DPSFRSNELS…AKGGSNVGDC (179 aa). N-linked (GlcNAc...) asparagine glycosylation is found at asparagine 2775, asparagine 2800, and asparagine 2824. Disulfide bonds link cysteine 2868–cysteine 2895, cysteine 2900–cysteine 2911, cysteine 2905–cysteine 2920, and cysteine 2922–cysteine 2931. EGF-like domains are found at residues 2896-2932 and 2933-2970; these read DGTACGYNTCRNGGECTVNGTTFSCRCLPDWAGNTCN and QSVYCLNNLCLHQSLCIPNQSFSYSCLCTLGWVGRYCE. Residue asparagine 2914 is glycosylated (N-linked (GlcNAc...) asparagine). Residue asparagine 2932 is glycosylated (N-linked (GlcNAc...) asparagine). 3 disulfide bridges follow: cysteine 2937-cysteine 2948, cysteine 2942-cysteine 2958, and cysteine 2960-cysteine 2969. An N-linked (GlcNAc...) asparagine glycan is attached at asparagine 2951. N-linked (GlcNAc...) asparagine glycosylation is found at asparagine 2971, asparagine 3006, asparagine 3036, asparagine 3057, asparagine 3073, and asparagine 3082. Positions 2975–3164 constitute a Laminin G-like 5 domain; it reads FSTAKFMGNS…YDGDEQNEVT (190 aa).

The protein belongs to the EYS family.

The protein localises to the cell projection. It localises to the cilium. The protein resides in the photoreceptor outer segment. It is found in the cytoplasm. Its subcellular location is the cytoskeleton. The protein localises to the cilium axoneme. It localises to the microtubule organizing center. The protein resides in the centrosome. It is found in the secreted. Its subcellular location is the extracellular space. The protein localises to the extracellular matrix. It localises to the interphotoreceptor matrix. Its function is as follows. Required to maintain the integrity of photoreceptor cells. Specifically required for normal morphology of the photoreceptor ciliary pocket, and might thus facilitate protein trafficking between the photoreceptor inner and outer segments via the transition zone. This chain is Protein eyes shut homolog (EYS), found in Pongo abelii (Sumatran orangutan).